The chain runs to 335 residues: MKKIGIIGVSGYTGLELIKIILNHSGFKLSYLAATSEGEISEIFPQLAGVLNMKVEIADAKEAAKRCDLVFLALPHEKAMEFAREILEFNSTKVVDLSADYRLSLKLYEKNYTKHLDPKNLSHAVYGLVEINREKIKKARLVANPGCYPTCSILAIAPFVNFIDKNIGVFIDAKSGVSGAGKGLKTTSHFVSANENLNAYSPITHRHADEIKEQIGILAGSEIDTIFVPNLVSITRGMSVSVFAVLKEKIDADKILKEFYKDEEFIRFRDEPVQIKNVVGTHFCDIFVRTACNKIFINSAIDNLLKGASSQAVANANLMLDEPENSALPKIAYGI.

Residue Cys-147 is part of the active site.

Belongs to the NAGSA dehydrogenase family. Type 1 subfamily.

It localises to the cytoplasm. It carries out the reaction N-acetyl-L-glutamate 5-semialdehyde + phosphate + NADP(+) = N-acetyl-L-glutamyl 5-phosphate + NADPH + H(+). It participates in amino-acid biosynthesis; L-arginine biosynthesis; N(2)-acetyl-L-ornithine from L-glutamate: step 3/4. Its function is as follows. Catalyzes the NADPH-dependent reduction of N-acetyl-5-glutamyl phosphate to yield N-acetyl-L-glutamate 5-semialdehyde. The protein is N-acetyl-gamma-glutamyl-phosphate reductase of Campylobacter hominis (strain ATCC BAA-381 / DSM 21671 / CCUG 45161 / LMG 19568 / NCTC 13146 / CH001A).